The sequence spans 313 residues: tRNA dimethylallyltransferase (313 aa).

11-18 (GPTACGKT) serves as a coordination point for ATP. 13 to 18 (TACGKT) is a binding site for substrate. 3 interaction with substrate tRNA regions span residues 36-39 (DSAL), 160-164 (QRIGR), and 243-248 (RCVGYR).

Belongs to the IPP transferase family. In terms of assembly, monomer. It depends on Mg(2+) as a cofactor.

It catalyses the reaction adenosine(37) in tRNA + dimethylallyl diphosphate = N(6)-dimethylallyladenosine(37) in tRNA + diphosphate. Catalyzes the transfer of a dimethylallyl group onto the adenine at position 37 in tRNAs that read codons beginning with uridine, leading to the formation of N6-(dimethylallyl)adenosine (i(6)A). The sequence is that of tRNA dimethylallyltransferase from Neisseria gonorrhoeae (strain ATCC 700825 / FA 1090).